The following is a 712-amino-acid chain: Patatin-like phospholipase domain-containing protein NFIA_019760 (712 aa).

Over residues 1-13 (MTSDEKSATRDIY) the composition is skewed to basic and acidic residues. The interval 1-21 (MTSDEKSATRDIYDPNTLPDY) is disordered. Residues 85–105 (WPFLFTVFAWITVLGFAYTLT) traverse the membrane as a helical segment. One can recognise a PNPLA domain in the interval 275–466 (LCLSGGATFA…RTDIPIKALN (192 aa)). The short motif at 306-310 (GTSGG) is the GXSXG element. S308 (nucleophile) is an active-site residue. D453 functions as the Proton acceptor in the catalytic mechanism. A disordered region spans residues 628-687 (RRRQDRAEEHADRMVERLDQSFPERQSDYKDESHYTEVSDSLSATSSRPHTPDARRSSMF). Basic and acidic residues-rich tracts occupy residues 632 to 646 (DRAE…ERLD) and 652 to 664 (RQSD…HYTE). Residues 665-676 (VSDSLSATSSRP) show a composition bias toward polar residues. The segment covering 677–687 (HTPDARRSSMF) has biased composition (basic and acidic residues).

Belongs to the PLPL family.

It is found in the membrane. In terms of biological role, probable lipid hydrolase. This is Patatin-like phospholipase domain-containing protein NFIA_019760 from Neosartorya fischeri (strain ATCC 1020 / DSM 3700 / CBS 544.65 / FGSC A1164 / JCM 1740 / NRRL 181 / WB 181) (Aspergillus fischerianus).